The chain runs to 389 residues: Probable transcription factor FL (389 aa).

Disordered stretches follow at residues 1–41 (MDPN…ANVP) and 140–226 (EHDM…HPFV). Pro residues predominate over residues 19–39 (PPAPAPVPPPPPPPPPPPPAN). Basic residues predominate over residues 159–180 (VTGKKQAKKGSAARKGKKARRK). Residues 161 to 168 (GKKQAKKG) carry the Nuclear localization signal motif. The span at 190 to 201 (QEDEMDCCDEDG) shows a compositional bias: acidic residues. DNA-binding regions lie at residues 221 to 225 (REHPF), 290 to 297 (NKPKMRHY), and 361 to 364 (YVPT).

This sequence belongs to the FLO/LFY family. As to quaternary structure, interacts with APO1. In terms of tissue distribution, in very young panicle but not in mature florets, mature leaves, roots or apical meristems.

Its subcellular location is the nucleus. In terms of biological role, probable transcription factor. Together with APO1, involved in the temporal regulation of meristem size and identity during both vegetative and reproductive developments through interaction with APO1. Promotes flowering. The protein is Probable transcription factor FL of Oryza sativa subsp. japonica (Rice).